We begin with the raw amino-acid sequence, 215 residues long: Pyrrolidone-carboxylate peptidase (215 aa).

Active-site residues include glutamate 78, cysteine 141, and histidine 165.

This sequence belongs to the peptidase C15 family. As to quaternary structure, homotetramer.

The protein resides in the cytoplasm. The catalysed reaction is Release of an N-terminal pyroglutamyl group from a polypeptide, the second amino acid generally not being Pro.. In terms of biological role, removes 5-oxoproline from various penultimate amino acid residues except L-proline. This is Pyrrolidone-carboxylate peptidase from Streptococcus pyogenes serotype M12 (strain MGAS2096).